We begin with the raw amino-acid sequence, 204 residues long: Holliday junction branch migration complex subunit RuvA (204 aa).

A domain I region spans residues 1–64 (MIGRLRGIIL…EDAQLLYGFN (64 aa)). Residues 65 to 142 (NKQERALFRE…KGLNGDLFNN (78 aa)) are domain II. The segment at 143-155 (TGDISLPTASPQT) is flexible linker. Residues 156–204 (SDADIEAEAASALVALGYKPQEASRLVSKIAKPGADCETLIRDALRAAL) are domain III.

This sequence belongs to the RuvA family. As to quaternary structure, homotetramer. Forms an RuvA(8)-RuvB(12)-Holliday junction (HJ) complex. HJ DNA is sandwiched between 2 RuvA tetramers; dsDNA enters through RuvA and exits via RuvB. An RuvB hexamer assembles on each DNA strand where it exits the tetramer. Each RuvB hexamer is contacted by two RuvA subunits (via domain III) on 2 adjacent RuvB subunits; this complex drives branch migration. In the full resolvosome a probable DNA-RuvA(4)-RuvB(12)-RuvC(2) complex forms which resolves the HJ.

It is found in the cytoplasm. Its function is as follows. The RuvA-RuvB-RuvC complex processes Holliday junction (HJ) DNA during genetic recombination and DNA repair, while the RuvA-RuvB complex plays an important role in the rescue of blocked DNA replication forks via replication fork reversal (RFR). RuvA specifically binds to HJ cruciform DNA, conferring on it an open structure. The RuvB hexamer acts as an ATP-dependent pump, pulling dsDNA into and through the RuvAB complex. HJ branch migration allows RuvC to scan DNA until it finds its consensus sequence, where it cleaves and resolves the cruciform DNA. The chain is Holliday junction branch migration complex subunit RuvA from Yersinia pseudotuberculosis serotype O:1b (strain IP 31758).